A 166-amino-acid chain; its full sequence is Phosphopantetheine adenylyltransferase (166 aa).

Thr-14 lines the substrate pocket. ATP-binding positions include 14-15 (TF) and His-22. Substrate is bound by residues Lys-46, Leu-78, and Arg-92. Residues 93–95 (GLR), Glu-103, and 128–134 (WMYLSSS) contribute to the ATP site.

This sequence belongs to the bacterial CoaD family. As to quaternary structure, homohexamer. The cofactor is Mg(2+).

The protein resides in the cytoplasm. The enzyme catalyses (R)-4'-phosphopantetheine + ATP + H(+) = 3'-dephospho-CoA + diphosphate. The protein operates within cofactor biosynthesis; coenzyme A biosynthesis; CoA from (R)-pantothenate: step 4/5. In terms of biological role, reversibly transfers an adenylyl group from ATP to 4'-phosphopantetheine, yielding dephospho-CoA (dPCoA) and pyrophosphate. The chain is Phosphopantetheine adenylyltransferase from Maridesulfovibrio salexigens (strain ATCC 14822 / DSM 2638 / NCIMB 8403 / VKM B-1763) (Desulfovibrio salexigens).